A 393-amino-acid chain; its full sequence is 4-hydroxyphenylpyruvate dioxygenase (393 aa).

Thr2 bears the N-acetylthreonine mark. 2 VOC domains span residues 18-152 and 180-338; these read HFHS…KMTF and IIDH…IFTK. His183 is a Fe cation binding site. Phosphoserine occurs at positions 211, 226, and 250. Residues His266 and Glu349 each contribute to the Fe cation site.

Belongs to the 4HPPD family. As to quaternary structure, homodimer. Requires Fe cation as cofactor. As to expression, liver.

The protein resides in the cytoplasm. It localises to the endoplasmic reticulum membrane. Its subcellular location is the golgi apparatus membrane. The catalysed reaction is 3-(4-hydroxyphenyl)pyruvate + O2 = homogentisate + CO2. The protein operates within amino-acid degradation; L-phenylalanine degradation; acetoacetate and fumarate from L-phenylalanine: step 3/6. Functionally, catalyzes the conversion of 4-hydroxyphenylpyruvic acid to homogentisic acid, one of the steps in tyrosine catabolism. This Sus scrofa (Pig) protein is 4-hydroxyphenylpyruvate dioxygenase (HPD).